The sequence spans 66 residues: Large ribosomal subunit protein bL35 (66 aa).

A compositionally biased stretch (basic residues) spans 1-16; the sequence is MPKQKTHRASAKRFKR. The interval 1–20 is disordered; it reads MPKQKTHRASAKRFKRTGSG.

It belongs to the bacterial ribosomal protein bL35 family.

This chain is Large ribosomal subunit protein bL35, found in Streptococcus thermophilus (strain ATCC BAA-250 / LMG 18311).